A 212-amino-acid polypeptide reads, in one-letter code: Leucyl/phenylalanyl-tRNA--protein transferase (212 aa).

Belongs to the L/F-transferase family.

It is found in the cytoplasm. It catalyses the reaction N-terminal L-lysyl-[protein] + L-leucyl-tRNA(Leu) = N-terminal L-leucyl-L-lysyl-[protein] + tRNA(Leu) + H(+). The catalysed reaction is N-terminal L-arginyl-[protein] + L-leucyl-tRNA(Leu) = N-terminal L-leucyl-L-arginyl-[protein] + tRNA(Leu) + H(+). It carries out the reaction L-phenylalanyl-tRNA(Phe) + an N-terminal L-alpha-aminoacyl-[protein] = an N-terminal L-phenylalanyl-L-alpha-aminoacyl-[protein] + tRNA(Phe). Functions in the N-end rule pathway of protein degradation where it conjugates Leu, Phe and, less efficiently, Met from aminoacyl-tRNAs to the N-termini of proteins containing an N-terminal arginine or lysine. The chain is Leucyl/phenylalanyl-tRNA--protein transferase from Paracoccus denitrificans (strain Pd 1222).